The sequence spans 211 residues: Calcipressin-like protein (211 aa).

2 positions are modified to phosphoserine: serine 113 and serine 117. At threonine 182 the chain carries Phosphothreonine.

This sequence belongs to the RCAN family.

In terms of biological role, inhibits calcineurin-dependent transcriptional responses by binding to the catalytic domain of calcineurin. The protein is Calcipressin-like protein (RCN1) of Saccharomyces cerevisiae (strain ATCC 204508 / S288c) (Baker's yeast).